The chain runs to 377 residues: 5-hydroxytryptamine receptor 1D (377 aa).

N-linked (GlcNAc...) asparagine glycans are attached at residues asparagine 5, asparagine 17, and asparagine 21. The next 3 helical transmembrane spans lie at 39-64, 76-97, and 110-134; these read ISLA…TTIF, LIGS…ISIA, and LCDI…VIAL. A disulfide bridge links cysteine 111 with cysteine 188. 2 residues coordinate serotonin: aspartate 118 and cysteine 122. The short motif at 135-137 is the DRY motif; important for ligand-induced conformation changes element; sequence DRY. The next 4 membrane-spanning stretches (helical) occupy residues 155–176, 195–218, 301–326, and 336–359; these read AAVM…PLFW, ISYT…ILYG, KTLG…VLPI, and ALFD…YTVF. Serine 321 is a binding site for serotonin. Positions 352-356 match the NPxxY motif; important for ligand-induced conformation changes and signaling motif; that stretch reads NPIIY.

It belongs to the G-protein coupled receptor 1 family. In terms of assembly, homodimer. Heterodimer with HTR1B.

The protein localises to the cell membrane. G-protein coupled receptor for 5-hydroxytryptamine (serotonin). Also functions as a receptor for ergot alkaloid derivatives, various anxiolytic and antidepressant drugs and other psychoactive substances. Ligand binding causes a conformation change that triggers signaling via guanine nucleotide-binding proteins (G proteins) and modulates the activity of downstream effectors, such as adenylate cyclase. HTR1D is coupled to G(i)/G(o) G alpha proteins and mediates inhibitory neurotransmission by inhibiting adenylate cyclase activity. Regulates the release of 5-hydroxytryptamine in the brain, and thereby affects neural activity. May also play a role in regulating the release of other neurotransmitters. May play a role in vasoconstriction. The protein is 5-hydroxytryptamine receptor 1D (HTR1D) of Canis lupus familiaris (Dog).